The following is a 449-amino-acid chain: Ktr system potassium uptake protein D (449 aa).

The next 10 helical transmembrane spans lie at 17–37 (LIAL…SLPA), 46–66 (TFID…LTVV), 75–95 (IGIF…MTLG), 133–153 (VLFL…TYFL), 194–214 (FVQF…PVLV), 235–255 (ITTI…FALE), 297–317 (LFFI…GGGI), 355–375 (LVVT…LTIT), 380–400 (LLEL…SLGI), and 411–431 (VIMI…YLIG).

It belongs to the TrkH potassium transport family. Ktr (TC 2.A.38.4) subfamily. In terms of assembly, homodimer. Part of the KtrCD complex formed by an octameric catalytic ring of KtrC and a membrane associated dimer of KtrD forming a potassium channel.

The protein resides in the cell membrane. Integral membrane subunit of the KtrCD potassium uptake transporter. The 2 major potassium transporter complexes KtrAB and KtrCD confer resistance to both suddenly imposed and prolonged osmotic stress. In Bacillus subtilis (strain 168), this protein is Ktr system potassium uptake protein D (ktrD).